The sequence spans 122 residues: Large ribosomal subunit protein uL14 (122 aa).

Belongs to the universal ribosomal protein uL14 family. In terms of assembly, part of the 50S ribosomal subunit. Forms a cluster with proteins L3 and L19. In the 70S ribosome, L14 and L19 interact and together make contacts with the 16S rRNA in bridges B5 and B8.

Binds to 23S rRNA. Forms part of two intersubunit bridges in the 70S ribosome. This chain is Large ribosomal subunit protein uL14, found in Orientia tsutsugamushi (strain Ikeda) (Rickettsia tsutsugamushi).